Reading from the N-terminus, the 2009-residue chain is Protein Daple (2009 aa).

Residues 11-131 enclose the Calponin-homology (CH) domain; sequence LFLQSPLVTW…KVLLLVLGCA (121 aa). The segment at 221–251 is disordered; it reads QTQQPPSPGKFSSPDSTPSPTSSLSSEDKQH. 2 positions are modified to phosphoserine: S227 and S239. Residues 232 to 245 show a composition bias toward low complexity; the sequence is SSPDSTPSPTSSLS. Coiled-coil stretches lie at residues 247 to 425 and 456 to 1008; these read EDKQ…QKQS and ELNE…TQEG. A Phosphoserine modification is found at S486. A disordered region spans residues 1002–1036; that stretch reads LRQTQEGGDKAQNALKRPPGKVTSHQEKEAWEPSH. Residues 1025–1036 show a composition bias toward basic and acidic residues; that stretch reads SHQEKEAWEPSH. The stretch at 1190–1384 forms a coiled coil; the sequence is HRNLELEHKE…LEEKIMDQYK (195 aa). Over residues 1410–1419 the composition is skewed to basic and acidic residues; the sequence is KEGSRERLKS. Disordered stretches follow at residues 1410–1716 and 1757–1787; these read KEGS…GAKM and GMPS…HMPV. A compositionally biased stretch (low complexity) spans 1430–1439; that stretch reads PSDPASPSPS. The residue at position 1435 (S1435) is a Phosphoserine. Residues 1440 to 1449 show a composition bias toward polar residues; sequence QALRSQTENP. Low complexity-rich tracts occupy residues 1510 to 1524 and 1562 to 1581; these read TFST…SSST and NSLE…SLKG. Residue S1592 is modified to Phosphoserine. A GBA motif is present at residues 1652–1683; the sequence is HSASPSSEMVTLEEFLEESNRGGSPTHDTPSC. The segment covering 1681-1697 has biased composition (basic and acidic residues); it reads PSCRDDLLSDYFRKAHD. Positions 1761–1783 are enriched in polar residues; the sequence is RQVQPPQSLSLGRPRQTTMTQNC. S1798 is modified (phosphoserine). The interval 1808–2009 is disordered; the sequence is SGPEACRPES…QTVWYEYGCV (202 aa). Basic and acidic residues predominate over residues 1866 to 1883; the sequence is RPLDTRRFSLAPPKEERL. The span at 1898–1911 shows a compositional bias: polar residues; the sequence is GCSSGSNPQIQHFS. The segment covering 1943–1954 has biased composition (gly residues); sequence TSEGDGGPGHGY. Positions 1981-1991 are enriched in polar residues; it reads SQGSSSKSTPA. Positions 2006 to 2009 match the PDZ-binding motif; the sequence is YGCV. Positions 2007–2009 are DVL1-binding; the sequence is GCV.

It belongs to the CCDC88 family. Homooligomer. Interacts with DVL1 (via PDZ domain); dissociates following initiation of non-canonical Wnt signaling. Interacts (via C-terminus) with ligand-activated Wnt receptor FZD7; competes with DVL1 for binding to FZD7 and displaces DVL1 from ligand-activated FZD7. Interacts (via GBA motif) with guanine nucleotide-binding protein G(i) alpha subunits GNAI1, GNAI2 and GNAI3 (inactive GDP-bound form); interacts with higher affinity with GNAI1 and GNAI3 than with GNAI2 and interaction leads to G(i) alpha subunit activation. Does not interact with GNAO1.

The protein localises to the cytoplasm. It localises to the cell junction. Its function is as follows. Required for activation of guanine nucleotide-binding proteins (G-proteins) during non-canonical Wnt signaling. Binds to ligand-activated Wnt receptor FZD7, displacing DVL1 from the FZD7 receptor and leading to inhibition of canonical Wnt signaling. Acts as a non-receptor guanine nucleotide exchange factor by also binding to guanine nucleotide-binding protein G(i) alpha (Gi-alpha) subunits, leading to their activation. Binding to Gi-alpha subunits displaces the beta and gamma subunits from the heterotrimeric G-protein complex, triggering non-canonical Wnt responses such as activation of RAC1 and PI3K-AKT signaling. Promotes apical constriction of cells via ARHGEF18. The chain is Protein Daple (Ccdc88c) from Mus musculus (Mouse).